The chain runs to 4010 residues: Extracellular matrix organizing protein FRAS1 (4010 aa).

The N-terminal stretch at 1 to 25 (MGVLKAWLGVALALAEFAVLPNCEG) is a signal peptide. VWFC domains are found at residues 26 to 87 (ACLY…PQCA), 92 to 152 (GSCH…PICV), 156 to 216 (KPCS…SQCS), 218 to 278 (RSCS…EECA), and 282 to 342 (RSCS…PECI). Residues 26–3903 (ACLYQGSFLA…AASLSQTGAS (3878 aa)) are Extracellular-facing. Residue Ser-343 is modified to Phosphoserine. Positions 358–416 (SSSAREIKHVPDGEKWEEGPCKLCECREAQVTCYEPSCPPCPVATLALVVKGQCCPDCT) constitute a VWFC 6 domain. FU repeat units lie at residues 408–459 (KGQC…GFYQ), 461–504 (GSLC…GFYQ), 506–552 (HHSC…GFYN), 554–598 (QGTC…GYYA), 601–646 (TGSC…GFYP), 648–704 (HGIC…HFYL), 707–752 (TGLC…THFN), 754–799 (EGTC…EQFL), 802–851 (VGYC…GHYK), 853–899 (RGTC…GHYL), 902–947 (NQVC…QYYL), 951–996 (TKTC…QHYR), 998–1041 (SGSC…GYFA), and 1045–1088 (KHRC…GFSG). An N-linked (GlcNAc...) asparagine glycan is attached at Asn-727. 2 N-linked (GlcNAc...) asparagine glycosylation sites follow: Asn-1094 and Asn-1107. CSPG repeat units follow at residues 1101 to 1196 (TPSL…LKIS), 1216 to 1307 (APYV…FQAN), 1328 to 1440 (ALRL…FQVS), 1465 to 1561 (APKL…FSFA), 1597 to 1691 (PAFQ…ISVT), 1712 to 1812 (GPRL…FSVS), and 1834 to 1938 (PPHI…FYVS). Asn-1506 is a glycosylation site (N-linked (GlcNAc...) asparagine). Residue Asn-1779 is glycosylated (N-linked (GlcNAc...) asparagine). Residues Asn-1950 and Asn-1980 are each glycosylated (N-linked (GlcNAc...) asparagine). CSPG repeat units follow at residues 1959-2059 (EPPR…FSLT), 2080-2179 (IPHL…FDVV), 2201-2293 (PPVV…FVLS), 2313-2406 (ARPL…FTVS), and 2441-2538 (TPRI…FLVK). Calx-beta domains follow at residues 2545–2648 (VSDN…VGLS), 2661–2772 (AKVV…IALA), 2786–2892 (AKVL…VFLS), 2907–3009 (IAIN…VYLG), and 3027–3131 (ATVT…LVLG). Asn-2565, Asn-2666, and Asn-2684 each carry an N-linked (GlcNAc...) asparagine glycan. 6 N-linked (GlcNAc...) asparagine glycosylation sites follow: Asn-2910, Asn-2987, Asn-3072, Asn-3220, Asn-3678, and Asn-3877. The chain crosses the membrane as a helical span at residues 3904–3924 (IGSALAAIMLLLLLFLVACFV). Over 3925–4010 (TRKCQKQKKK…HNNLQDGTEV (86 aa)) the chain is Cytoplasmic.

It belongs to the FRAS1 family.

It localises to the cell membrane. In terms of biological role, involved in extracellular matrix organization. Required for the regulation of epidermal-basement membrane adhesion responsible for proper organogenesis during embryonic development. Involved in brain organization and function. This chain is Extracellular matrix organizing protein FRAS1, found in Mus musculus (Mouse).